Here is a 351-residue protein sequence, read N- to C-terminus: Beta-hexosaminidase (351 aa).

Residues D62, R70, R134, and 164 to 165 each bind substrate; that span reads KH. H177 acts as the Proton donor/acceptor in catalysis. The active-site Nucleophile is D249.

This sequence belongs to the glycosyl hydrolase 3 family. NagZ subfamily.

The protein resides in the cytoplasm. The enzyme catalyses Hydrolysis of terminal non-reducing N-acetyl-D-hexosamine residues in N-acetyl-beta-D-hexosaminides.. Its pathway is cell wall biogenesis; peptidoglycan recycling. Plays a role in peptidoglycan recycling by cleaving the terminal beta-1,4-linked N-acetylglucosamine (GlcNAc) from peptide-linked peptidoglycan fragments, giving rise to free GlcNAc, anhydro-N-acetylmuramic acid and anhydro-N-acetylmuramic acid-linked peptides. This chain is Beta-hexosaminidase, found in Histophilus somni (strain 129Pt) (Haemophilus somnus).